The chain runs to 545 residues: Carboxypeptidase Y homolog A (545 aa).

Residues 1 to 18 form the signal peptide; sequence MKSSLALALLVGGAIASG. A propeptide spanning residues 19-125 is cleaved from the precursor; the sequence is PQQQVLREPV…RLDTYDLRVK (107 aa). 5 disulfide bridges follow: Cys179–Cys418, Cys313–Cys327, Cys337–Cys360, Cys344–Cys353, and Cys382–Cys388. Asn210 is a glycosylation site (N-linked (GlcNAc...) asparagine). Residue Ser266 is part of the active site. Asp457 is a catalytic residue. N-linked (GlcNAc...) asparagine glycans are attached at residues Asn487 and Asn507. His518 is an active-site residue.

This sequence belongs to the peptidase S10 family.

The protein resides in the vacuole. The catalysed reaction is Release of a C-terminal amino acid with broad specificity.. In terms of biological role, vacuolar carboxypeptidase involved in degradation of small peptides. Digests preferentially peptides containing an aliphatic or hydrophobic residue in P1' position, as well as methionine, leucine or phenylalanine in P1 position of ester substrate. The polypeptide is Carboxypeptidase Y homolog A (CPYA) (Ajellomyces capsulatus (strain NAm1 / WU24) (Darling's disease fungus)).